A 382-amino-acid chain; its full sequence is Protein delta homolog 2 (382 aa).

An N-terminal signal peptide occupies residues 1 to 26; the sequence is MPSGCRCLNLVCLLCILGATSQPARA. EGF-like domains are found at residues 27-58, 62-89, 91-129, and 131-172; these read DDCS…LHCE, RMPG…KFCD, DEHI…RGCE, and KAGP…AHCE. Residues 27–305 lie on the Extracellular side of the membrane; it reads DDCSSHCDLA…RQESGLGESS (279 aa). Cystine bridges form between Cys29–Cys40, Cys33–Cys46, Cys48–Cys57, Cys66–Cys71, Cys79–Cys88, Cys95–Cys107, Cys101–Cys117, Cys119–Cys128, Cys135–Cys148, Cys142–Cys160, Cys162–Cys171, Cys178–Cys189, Cys183–Cys198, Cys200–Cys209, Cys216–Cys227, Cys221–Cys236, and Cys238–Cys247. Asn157 carries N-linked (GlcNAc...) asparagine glycosylation. In terms of domain architecture, EGF-like 5; calcium-binding spans 174–210; that stretch reads NVDDCLMRPCANGATCIDGINRFSCLCPEGFAGRFCT. The 37-residue stretch at 212–248 folds into the EGF-like 6; calcium-binding domain; the sequence is NLDDCASRPCQRGARCRDRVHDFDCLCPSGYGGKTCE. The helical transmembrane segment at 306–326 threads the bilayer; the sequence is LVALVVFGSLTAALVLATVLL. The Cytoplasmic segment spans residues 327–382; it reads TLRAWRRGICPTGPCCYPAPHYAPARQDQECQVSMLPAGFPLSPDLPPEPGKTTAL.

Detected in a number of tissues including lung, brain, adrenal gland, testis, adult liver, placenta, ovary and thymus. Not detected in fetal liver or in adult spleen, muscle and heart.

Its subcellular location is the membrane. Regulates adipogenesis. In Mus musculus (Mouse), this protein is Protein delta homolog 2 (Dlk2).